Reading from the N-terminus, the 147-residue chain is 3-dehydroquinate dehydratase (147 aa).

Tyrosine 22 (proton acceptor) is an active-site residue. Residues asparagine 73, histidine 79, and aspartate 86 each contribute to the substrate site. The active-site Proton donor is the histidine 99. Substrate-binding positions include 100 to 101 and arginine 110; that span reads LS.

The protein belongs to the type-II 3-dehydroquinase family. Homododecamer.

It carries out the reaction 3-dehydroquinate = 3-dehydroshikimate + H2O. Its pathway is metabolic intermediate biosynthesis; chorismate biosynthesis; chorismate from D-erythrose 4-phosphate and phosphoenolpyruvate: step 3/7. Catalyzes a trans-dehydration via an enolate intermediate. This chain is 3-dehydroquinate dehydratase, found in Synechococcus sp. (strain WH7803).